The sequence spans 271 residues: Neurexophilin-1 (271 aa).

The N-terminal stretch at 1–21 (MQAACWYVLLLLQPTIYLVTC) is a signal peptide. Residues 22–97 (ANLTNGGKSE…WDWLRNSTDL (76 aa)) form an II region. Asparagine 23, asparagine 68, asparagine 93, asparagine 146, asparagine 156, and asparagine 162 each carry an N-linked (GlcNAc...) asparagine glycan. Positions 98-176 (QEPRPRAKRR…LVPPTKIVEF (79 aa)) are III. The segment at 177–185 (DLAQQTVID) is IV (linker domain). A v (Cys-rich) region spans residues 186–271 (AKDSKSFNCR…HSDTPYFPSG (86 aa)).

Belongs to the neurexophilin family.

The protein localises to the secreted. Functionally, may be signaling molecules that resemble neuropeptides and that act by binding to alpha-neurexins and possibly other receptors. This is Neurexophilin-1 (NXPH1) from Pongo abelii (Sumatran orangutan).